Here is a 531-residue protein sequence, read N- to C-terminus: Isocitrate lyase (531 aa).

101–103 is a substrate binding site; that stretch reads SGW. Aspartate 184 is a Mg(2+) binding site. Cysteine 222 acts as the Proton acceptor in catalysis. Residues 223–224, 380–384, and threonine 451 contribute to the substrate site; these read GH and NNSPS.

Belongs to the isocitrate lyase/PEP mutase superfamily. Isocitrate lyase family. Homotetramer. The cofactor is Mg(2+).

The catalysed reaction is D-threo-isocitrate = glyoxylate + succinate. It functions in the pathway carbohydrate metabolism; glyoxylate cycle; (S)-malate from isocitrate: step 1/2. In terms of biological role, involved in the metabolic adaptation in response to environmental changes. Catalyzes the reversible formation of succinate and glyoxylate from isocitrate, a key step of the glyoxylate cycle, which operates as an anaplerotic route for replenishing the tricarboxylic acid cycle during growth on fatty acid substrates. The chain is Isocitrate lyase from Pseudomonas aeruginosa (strain ATCC 15692 / DSM 22644 / CIP 104116 / JCM 14847 / LMG 12228 / 1C / PRS 101 / PAO1).